A 154-amino-acid polypeptide reads, in one-letter code: Protein Smg homolog (154 aa).

It belongs to the Smg family.

This Aromatoleum aromaticum (strain DSM 19018 / LMG 30748 / EbN1) (Azoarcus sp. (strain EbN1)) protein is Protein Smg homolog.